The sequence spans 331 residues: MATFISELEAAKKSLSEALGENVKQYWANLKLWFKQKISKEEFDIEARRLLTQENVHSHNDFLLAILTRCQILISAPEGTGSLNSATKPGKPKGKKKISSVRQKFDHRFQAQNPLAGAQQFVSRDPQEDDELKLCSHTMSLPTRGQLEGRMIVTAFEHGLDNVTEEAVTIVTCALEKHLKDLLTSVVSRRKAYRLKDGHFRYAFGCNVNPQPYLRNSVAAYNQLIECPPVFSSPTGAPNSGSYIHPDDAEQQAALLLACSGDNLTASLPPVNMYDLLEGLQVHREAIPSHTVYALNMERILMKLWHPNTEELQQDEIHRQRLAAKDGLLLC.

Belongs to the TADA1 family.

The protein localises to the nucleus. Functionally, probably involved in transcriptional regulation. This is Transcriptional adapter 1 (tada1) from Xenopus tropicalis (Western clawed frog).